We begin with the raw amino-acid sequence, 545 residues long: MAAKDVKFGNDARVKMLRGVNVLADAVKVTLGPKGRNVVLDKSFGAPVITKDGVSVAREIELEDKFENMGAQMVKEVASKANDSAGDGTTTATVLAQSIVNEGLKAVAAGMNPMDLKRGIDKAVVAAVEELKKLSVPCSDPKAIAQVGTISANSDETVGKLIAQAMDKVGKEGVITVEEGSGLQDELDVVEGMQFDRGYLSPYFVNKPESGTVELEHPFILLADKKISNIREMLPILESVAKAGKPLLIIAEDVEGEALATLVVNNMRGIVKVTAVKAPGFGDRRKAMLQDIAVLTAGTVISEEIGLELEKATLEDMGQAKRVVITKDATTIIDGVGNKSAINSRVAQINQQRDEATSDYDREKLQERVAKLAGGVAVIKVGAATEVEMKEKKARVEDALHATRAAVEEGVVAGGGVALIRVANAIRNLCGDNEDQNVGIKVARRAMEAPLRQIMANAGEEPSVIANNVRSGEGNTGYNAATEKYGNMIELGILDPTKVTRSALQYAASIAGLMITTECMVTELPKEDKPDLGNAGAGGNMGGMM.

Residues 30-33 (TLGP), Lys51, 87-91 (DGTTT), Gly415, 479-481 (NAA), and Asp495 contribute to the ATP site. The tract at residues 526-545 (KEDKPDLGNAGAGGNMGGMM) is disordered. Over residues 535–545 (AGAGGNMGGMM) the composition is skewed to gly residues.

Belongs to the chaperonin (HSP60) family. In terms of assembly, forms a cylinder of 14 subunits composed of two heptameric rings stacked back-to-back. Interacts with the co-chaperonin GroES.

Its subcellular location is the cytoplasm. It catalyses the reaction ATP + H2O + a folded polypeptide = ADP + phosphate + an unfolded polypeptide.. Together with its co-chaperonin GroES, plays an essential role in assisting protein folding. The GroEL-GroES system forms a nano-cage that allows encapsulation of the non-native substrate proteins and provides a physical environment optimized to promote and accelerate protein folding. The chain is Chaperonin GroEL from Blochmanniella pennsylvanica (strain BPEN).